A 135-amino-acid chain; its full sequence is Large ribosomal subunit protein uL16c (135 aa).

Belongs to the universal ribosomal protein uL16 family. In terms of assembly, part of the 50S ribosomal subunit.

It is found in the plastid. The protein localises to the chloroplast. The protein is Large ribosomal subunit protein uL16c of Ceratophyllum demersum (Rigid hornwort).